A 140-amino-acid chain; its full sequence is MVDNAGDYEARGDRLLGFPLPSPRVRIRPWWFPAQELRNPLVFFLEAWLADLIFGPDRALVPEMEWMSQALLMVDAVDAGNLVEVTVFARPAVQRQVKSVLLSQASVHREQRARAEKMEQLEEFLKAQAPGPQVPQHPVA.

Residues 40 to 101 (PLVFFLEAWL…AVQRQVKSVL (62 aa)) form the KH; atypical domain.

The protein belongs to the KHDC1 family. In terms of assembly, component of the subcortical maternal complex (SCMC), at least composed of NLRP5, KHDC3, OOEP, and TLE6. Within the complex, interacts with NLRP5, KHDC3 and TLE6. As part of the SCMC interacts with the SCMC-associated protein NLRP4F. The SCMC may facilitate translocation of its components between the nuclear and cytoplasmic compartments. Forms a scaffold complex with KHDC3/FILIA, and interacts with BLM and TRIM25 at DNA replication forks.

The protein localises to the cytoplasm. It localises to the nucleus. Component of the subcortical maternal complex (SCMC), a multiprotein complex that plays a key role in early embryonic development. The SCMC complex is a structural constituent of cytoplasmic lattices, which consist in fibrous structures found in the cytoplasm of oocytes and preimplantation embryos. They are required to store maternal proteins critical for embryonic development, such as proteins that control epigenetic reprogramming of the preimplantation embryo, and prevent their degradation or activation. As part of the OOEP-KHDC3 scaffold, recruits BLM and TRIM25 to DNA replication forks, thereby promoting the ubiquitination of BLM by TRIM25, enhancing BLM retainment at replication forks and therefore promoting stalled replication fork restart. Positively regulates the homologous recombination-mediated DNA double-strand break (DSB) repair pathway by regulating ATM activation and RAD51 recruitment to DSBs in oocytes. Thereby contributes to oocyte survival and the resumption and completion of meiosis. This Bos taurus (Bovine) protein is Oocyte-expressed protein homolog (OOEP).